Reading from the N-terminus, the 464-residue chain is UDP-N-acetylmuramoyl-tripeptide--D-alanyl-D-alanine ligase (464 aa).

Residue 125 to 131 coordinates ATP; it reads GSNGKTT.

This sequence belongs to the MurCDEF family. MurF subfamily.

The protein localises to the cytoplasm. The enzyme catalyses D-alanyl-D-alanine + UDP-N-acetyl-alpha-D-muramoyl-L-alanyl-gamma-D-glutamyl-meso-2,6-diaminopimelate + ATP = UDP-N-acetyl-alpha-D-muramoyl-L-alanyl-gamma-D-glutamyl-meso-2,6-diaminopimeloyl-D-alanyl-D-alanine + ADP + phosphate + H(+). It participates in cell wall biogenesis; peptidoglycan biosynthesis. Involved in cell wall formation. Catalyzes the final step in the synthesis of UDP-N-acetylmuramoyl-pentapeptide, the precursor of murein. The sequence is that of UDP-N-acetylmuramoyl-tripeptide--D-alanyl-D-alanine ligase from Borreliella burgdorferi (strain ATCC 35210 / DSM 4680 / CIP 102532 / B31) (Borrelia burgdorferi).